The sequence spans 370 residues: Phosphoserine aminotransferase (370 aa).

An N-acetylmethionine modification is found at methionine 1. The O-phospho-L-serine site is built by histidine 44 and arginine 45. Residue lysine 51 is modified to N6-acetyllysine. Pyridoxal 5'-phosphate is bound by residues glycine 79, cysteine 80, and tryptophan 107. Position 127 is an N6-acetyllysine (lysine 127). Positions 156, 176, and 199 each coordinate pyridoxal 5'-phosphate. Lysine 200 bears the N6-(pyridoxal phosphate)lysine mark. Pyridoxal 5'-phosphate-binding residues include asparagine 241 and threonine 242. N6-acetyllysine is present on residues lysine 269, lysine 318, and lysine 323. Serine 331 is subject to Phosphoserine. Lysine 333 bears the N6-acetyllysine mark. O-phospho-L-serine contacts are provided by histidine 335, arginine 336, and arginine 342.

Belongs to the class-V pyridoxal-phosphate-dependent aminotransferase family. SerC subfamily. Homodimer. It depends on pyridoxal 5'-phosphate as a cofactor. In terms of tissue distribution, expressed at high levels in the brain, liver, kidney and pancreas, and very weakly expressed in the thymus, prostate, testis and colon.

It carries out the reaction O-phospho-L-serine + 2-oxoglutarate = 3-phosphooxypyruvate + L-glutamate. Its pathway is amino-acid biosynthesis; L-serine biosynthesis; L-serine from 3-phospho-D-glycerate: step 2/3. Phosphoserine transaminase activity is strongly stimulated by increasing the ionic strength. Its function is as follows. Involved in L-serine biosynthesis via the phosphorylated pathway, a three-step pathway converting the glycolytic intermediate 3-phospho-D-glycerate into L-serine. Catalyzes the second step, that is the pyridoxal 5'-phosphate-dependent transamination of 3-phosphohydroxypyruvate and L-glutamate to O-phosphoserine (OPS) and alpha-ketoglutarate. The chain is Phosphoserine aminotransferase from Homo sapiens (Human).